The primary structure comprises 403 residues: Dynactin subunit 2-A (403 aa).

The interval 1-26 is disordered; it reads MADPKYADLPGIARNEPDVYETSDLP. The stretch at 99–132 forms a coiled coil; sequence PQQKYQRLLHEVQELTQEVEKTQSTVKESAAEEK. The tract at residues 183 to 203 is disordered; that stretch reads AAKTRKNPEGKSPAKGPGPDT. The stretch at 381–401 forms a coiled coil; sequence KENLATVEDNFSNIDGRIKKL.

It belongs to the dynactin subunit 2 family. Subunit of dynactin, a multiprotein complex part of a tripartite complex with dynein and a adapter, such as BICDL1, BICD2 or HOOK3. The dynactin complex is built around ACTR1A/ACTB filament and consists of an actin-related filament composed of a shoulder domain, a pointed end and a barbed end. Its length is defined by its flexible shoulder domain. The soulder is composed of 2 DCTN1 subunits, 4 DCTN2 and 2 DCTN3.

The protein localises to the cytoplasm. The protein resides in the cytoskeleton. It localises to the microtubule organizing center. It is found in the centrosome. Its subcellular location is the membrane. Its function is as follows. Part of the dynactin complex that activates the molecular motor dynein for ultra-processive transport along microtubules. In the dynactin soulder domain, binds the ACTR1A filament and acts as a molecular ruler to determine the length. Modulates cytoplasmic dynein binding to an organelle, and plays a role in prometaphase chromosome alignment and spindle organization during mitosis. Involved in anchoring microtubules to centrosomes. The polypeptide is Dynactin subunit 2-A (dctn2-a) (Xenopus laevis (African clawed frog)).